The primary structure comprises 121 residues: Holin-like protein CidA (121 aa).

4 consecutive transmembrane segments (helical) span residues Trp3–Ile23, Pro30–Val50, Gly58–Ile78, and Ile89–Leu109.

The protein belongs to the CidA/LrgA family. CidA subfamily.

Its subcellular location is the cell membrane. Increases the activity of extracellular murein hydrolases possibly by mediating their export via hole formation. Inhibited by the antiholin-like proteins LrgAB. In an unstressed cell, the LrgAB products probably inhibit the function of the CidA protein. When a cell is stressed by the addition of antibiotics or by other factors in the environment, CidA possibly oligomerizes within the bacterial cell membrane, creating lesions that disrupt the proton motive force, which in turn results in loss of cell viability. These lesions are also hypothesized to regulate the subsequent cell lysis by either allowing the murein hydrolases access to the cell wall substrate and/or regulating their activity by a possible change in the cell wall pH that results from loss of membrane potential. This Bacillus cereus (strain ATCC 10987 / NRS 248) protein is Holin-like protein CidA.